A 376-amino-acid chain; its full sequence is MTKSLPGVADLRLGANHPRMWTRRVQGTVVNVGVKVLPWIPTPAKRILSAGRSVIIDGNTLDPTLQLMLSTSRIFGVDGLAVDDDIVASRAHMRAICEAMPGPQIHVDVTDLSIPGPAGEIPARHYRPSGGGATPLLVFYHGGGWTLGDLDTHDALCRLTCRDADIQVLSIDYRLAPEHPAPAAVEDAYAAFVWAHEHASDEFGALPGRVAVGGDSAGGNLSAVVCQLARDKARYEGGPTPVLQWLLYPRTDFTAQTRSMGLFGNGFLLTKRDIDWFHTQYLRDSDVDPADPRLSPLLAESLSGLAPALIAVAGFDPLRDEGESYAKALRAAGTAVDLRYLGSLTHGFLNLFQLGGGSAAGTNELISALRAHLSRV.

Residues Ser-216, Asp-316, and His-346 contribute to the active site.

The protein belongs to the 'GDXG' lipolytic enzyme family.

The protein resides in the cytoplasm. It catalyses the reaction a carboxylic ester + H2O = an alcohol + a carboxylate + H(+). It carries out the reaction an acetyl ester + H2O = an aliphatic alcohol + acetate + H(+). The enzyme catalyses a butanoate ester + H2O = an aliphatic alcohol + butanoate + H(+). The catalysed reaction is an octanoate ester + H2O = an aliphatic alcohol + octanoate + H(+). It catalyses the reaction decanoate ester + H2O = decanoate + an aliphatic alcohol + H(+). It carries out the reaction a dodecanoate ester + H2O = an aliphatic alcohol + dodecanoate + H(+). The enzyme catalyses 1,2,3-tributanoylglycerol + H2O = dibutanoylglycerol + butanoate + H(+). The catalysed reaction is 4-acetoxyphenol + H2O = hydroquinone + acetate + H(+). Its activity is regulated as follows. Completely inhibited by tetrahydrolipstatin (THL), RHC-80267 and N-bromosuccinimide. Non specific carboxylic ester hydrolase. Hydrolyzes various pNP-esters, with a preference for short carbon chain substrates. Can also hydrolyze tributyrin to di- and monobutyrin and 4-hydroxyphenylacetate to hydroquinone. The chain is Carboxylic ester hydrolase LipN from Mycobacterium tuberculosis (strain ATCC 25618 / H37Rv).